The following is a 281-amino-acid chain: Formamidopyrimidine-DNA glycosylase (281 aa).

Pro-2 serves as the catalytic Schiff-base intermediate with DNA. Catalysis depends on Glu-3, which acts as the Proton donor. The Proton donor; for beta-elimination activity role is filled by Lys-58. Positions 100, 119, and 160 each coordinate DNA. An FPG-type zinc finger spans residues 245–281 (RVYGREGAPCPTPGCTGTVQRIVQSGRSSFFCPLCQQ). Arg-271 acts as the Proton donor; for delta-elimination activity in catalysis.

The protein belongs to the FPG family. Monomer. Zn(2+) is required as a cofactor.

The enzyme catalyses Hydrolysis of DNA containing ring-opened 7-methylguanine residues, releasing 2,6-diamino-4-hydroxy-5-(N-methyl)formamidopyrimidine.. It catalyses the reaction 2'-deoxyribonucleotide-(2'-deoxyribose 5'-phosphate)-2'-deoxyribonucleotide-DNA = a 3'-end 2'-deoxyribonucleotide-(2,3-dehydro-2,3-deoxyribose 5'-phosphate)-DNA + a 5'-end 5'-phospho-2'-deoxyribonucleoside-DNA + H(+). Functionally, involved in base excision repair of DNA damaged by oxidation or by mutagenic agents. Acts as a DNA glycosylase that recognizes and removes damaged bases. Has a preference for oxidized purines, such as 7,8-dihydro-8-oxoguanine (8-oxoG). Has AP (apurinic/apyrimidinic) lyase activity and introduces nicks in the DNA strand. Cleaves the DNA backbone by beta-delta elimination to generate a single-strand break at the site of the removed base with both 3'- and 5'-phosphates. This Paracoccus denitrificans (strain Pd 1222) protein is Formamidopyrimidine-DNA glycosylase.